We begin with the raw amino-acid sequence, 1167 residues long: Kinesin-like protein KIN-14M (1167 aa).

Residues 93 to 130 (PRKENDPGTQNSEGRRKIPKNPAMSEPSSPLSQTTLSS) form a disordered region. A compositionally biased stretch (low complexity) spans 117 to 130 (SEPSSPLSQTTLSS). Coiled coils occupy residues 271–333 (VHQM…KEEM), 366–398 (AKYR…AMKS), and 432–489 (KQEL…ESRS). Positions 572–900 (NIRVHCRIRP…LKFADRVSGV (329 aa)) constitute a Kinesin motor domain. ATP is bound at residue 656-663 (GQTGSGKT). Residues 907 to 944 (ANKEGKDIKEFKEQLSLLKDKIAKKDEEISRLQLQSHN) adopt a coiled-coil conformation. Disordered regions lie at residues 955–974 (SLLK…SKIQ) and 1083–1167 (PDQD…KRWT). The span at 958-972 (KHSSSSPGISSLGSK) shows a compositional bias: low complexity. Polar residues-rich tracts occupy residues 1113–1124 (ASRTTTPKTPQS) and 1151–1167 (TQAT…KRWT).

This sequence belongs to the TRAFAC class myosin-kinesin ATPase superfamily. Kinesin family. KIN-14 subfamily.

The sequence is that of Kinesin-like protein KIN-14M from Oryza sativa subsp. japonica (Rice).